Reading from the N-terminus, the 226-residue chain is PKHD-type hydroxylase HNE_2117 (226 aa).

The region spanning 78–178 (TVLTPRFNRY…RLASFLWTQS (101 aa)) is the Fe2OG dioxygenase domain. Fe cation-binding residues include His96, Asp98, and His159. Arg169 contacts 2-oxoglutarate.

It depends on Fe(2+) as a cofactor. L-ascorbate is required as a cofactor.

The protein is PKHD-type hydroxylase HNE_2117 of Hyphomonas neptunium (strain ATCC 15444).